We begin with the raw amino-acid sequence, 604 residues long: Lipoma-preferred partner homolog (604 aa).

Disordered stretches follow at residues 31 to 96 (TPSI…LDDV) and 129 to 381 (DLES…AFRP). A compositionally biased stretch (polar residues) spans 32 to 41 (PSISVSTQQT). Composition is skewed to low complexity over residues 42–53 (PKKFAPVVAPKP) and 143–161 (GSGT…TPVT). Polar residues predominate over residues 207 to 226 (SYTTASTPSRPTFNVQVRTA). A compositionally biased stretch (low complexity) spans 365–377 (SGYPSSGPTSSTP). LIM zinc-binding domains follow at residues 406-465 (GRCA…INTL), 466-526 (EQCS…KFAP), and 527-595 (RCSV…RIQA).

Belongs to the zyxin/ajuba family.

Its subcellular location is the nucleus. It is found in the cytoplasm. The protein resides in the cell junction. Functionally, may play a structural role at sites of cell adhesion in maintaining cell shape and motility. May be involved in signal transduction from cell adhesion sites to the nucleus. The protein is Lipoma-preferred partner homolog (LPP) of Gallus gallus (Chicken).